We begin with the raw amino-acid sequence, 203 residues long: Ribosomal RNA large subunit methyltransferase E (203 aa).

Positions 51, 53, 69, 85, and 109 each coordinate S-adenosyl-L-methionine. Lys-149 functions as the Proton acceptor in the catalytic mechanism.

The protein belongs to the class I-like SAM-binding methyltransferase superfamily. RNA methyltransferase RlmE family.

The protein localises to the cytoplasm. It catalyses the reaction uridine(2552) in 23S rRNA + S-adenosyl-L-methionine = 2'-O-methyluridine(2552) in 23S rRNA + S-adenosyl-L-homocysteine + H(+). In terms of biological role, specifically methylates the uridine in position 2552 of 23S rRNA at the 2'-O position of the ribose in the fully assembled 50S ribosomal subunit. The protein is Ribosomal RNA large subunit methyltransferase E of Methanoculleus marisnigri (strain ATCC 35101 / DSM 1498 / JR1).